A 191-amino-acid polypeptide reads, in one-letter code: Auxin-responsive protein IAA32 (191 aa).

The EAR-like (transcriptional repression) signature appears at 32–36 (LGLSL). Residues 98–184 (YAYVKVNLDG…SVDRMRIARR (87 aa)) enclose the PB1 domain.

This sequence belongs to the Aux/IAA family. In terms of assembly, homodimers and heterodimers.

It is found in the nucleus. Functionally, aux/IAA proteins are short-lived transcriptional factors that function as repressors of early auxin response genes at low auxin concentrations. Repression is thought to result from the interaction with auxin response factors (ARFs), proteins that bind to the auxin-responsive promoter element (AuxRE). Formation of heterodimers with ARF proteins may alter their ability to modulate early auxin response genes expression. The protein is Auxin-responsive protein IAA32 of Arabidopsis thaliana (Mouse-ear cress).